Here is an 887-residue protein sequence, read N- to C-terminus: Collagen alpha-2(I) chain (887 aa).

A compositionally biased stretch (low complexity) spans 1–42 (GPMGIMGPRGPPGASGAPGPQGFQGPPGEPGEPGQTGPAGAR). The disordered stretch occupies residues 1 to 887 (GPMGIMGPRG…PGPPGPPGPS (887 aa)). Residues 51–65 (AGEDGHPGKPGRSGE) are compositionally biased toward basic and acidic residues. Low complexity-rich tracts occupy residues 126-155 (VGAP…SAGP), 170-194 (PVGS…VSGP), 221-236 (PGPV…RGIV), 278-290 (IRGS…IPGA), 368-388 (AGIA…AQGP), 444-455 (PGESGAAGPTGP), and 473-503 (EPGV…IPGP). The segment covering 504–517 (KGEKGEPGIRRDGA) has biased composition (basic and acidic residues). 6 stretches are compositionally biased toward low complexity: residues 518–533 (RGAP…AGAN), 560–580 (VGPA…QPGA), 595–605 (ATGFPGAAGRT), 658–673 (PGPQ…IGIP), 690–720 (EPGP…APGE), and 766–782 (EPGP…VGPR). A compositionally biased stretch (basic and acidic residues) spans 791–802 (RGDKGEPGDKGP). Pro residues predominate over residues 872–887 (AGPPGPPGPPGPPGPS).

This sequence belongs to the fibrillar collagen family. In terms of assembly, trimers of one alpha 2(I) and two alpha 1(I) chains. Interacts (via C-terminus) with TMEM131 (via PapD-L domain); the interaction is direct and is involved in assembly and TRAPPIII ER-to-Golgi transport complex-dependent secretion of collagen. In terms of processing, prolines at the third position of the tripeptide repeating unit (G-X-Y) are hydroxylated in some or all of the chains. In terms of tissue distribution, forms the fibrils of tendon, ligaments and bones. In bones, the fibrils are mineralized with calcium hydroxyapatite.

Its subcellular location is the secreted. It localises to the extracellular space. The protein resides in the extracellular matrix. Its function is as follows. Type I collagen is a member of group I collagen (fibrillar forming collagen). This is Collagen alpha-2(I) chain from Hippopotamus amphibius (Hippopotamus).